Here is a 127-residue protein sequence, read N- to C-terminus: Small ribosomal subunit protein uS11 (127 aa).

Belongs to the universal ribosomal protein uS11 family. As to quaternary structure, part of the 30S ribosomal subunit. Interacts with proteins S7 and S18. Binds to IF-3.

In terms of biological role, located on the platform of the 30S subunit, it bridges several disparate RNA helices of the 16S rRNA. Forms part of the Shine-Dalgarno cleft in the 70S ribosome. This chain is Small ribosomal subunit protein uS11, found in Rickettsia prowazekii (strain Madrid E).